Consider the following 267-residue polypeptide: Tryptophan synthase alpha chain (267 aa).

Residues Glu49 and Asp60 each act as proton acceptor in the active site.

It belongs to the TrpA family. In terms of assembly, tetramer of two alpha and two beta chains.

It catalyses the reaction (1S,2R)-1-C-(indol-3-yl)glycerol 3-phosphate + L-serine = D-glyceraldehyde 3-phosphate + L-tryptophan + H2O. It participates in amino-acid biosynthesis; L-tryptophan biosynthesis; L-tryptophan from chorismate: step 5/5. Its function is as follows. The alpha subunit is responsible for the aldol cleavage of indoleglycerol phosphate to indole and glyceraldehyde 3-phosphate. This is Tryptophan synthase alpha chain from Solibacter usitatus (strain Ellin6076).